Consider the following 120-residue polypeptide: Large ribosomal subunit protein bL19 (120 aa).

It belongs to the bacterial ribosomal protein bL19 family.

Functionally, this protein is located at the 30S-50S ribosomal subunit interface and may play a role in the structure and function of the aminoacyl-tRNA binding site. This Chlorobium phaeobacteroides (strain DSM 266 / SMG 266 / 2430) protein is Large ribosomal subunit protein bL19.